A 246-amino-acid polypeptide reads, in one-letter code: UPF0758 protein SSU98_1084 (246 aa).

The 123-residue stretch at 103-225 (RILGSEKLGR…YYSFREESDV (123 aa)) folds into the MPN domain. Positions 174, 176, and 187 each coordinate Zn(2+). Positions 174–187 (HNHPSGSVQPSRND) match the JAMM motif motif.

Belongs to the UPF0758 family.

This is UPF0758 protein SSU98_1084 from Streptococcus suis (strain 98HAH33).